We begin with the raw amino-acid sequence, 271 residues long: Regulatory protein RecX (271 aa).

It belongs to the RecX family.

Its subcellular location is the cytoplasm. Functionally, modulates RecA activity. The polypeptide is Regulatory protein RecX (Lactobacillus delbrueckii subsp. bulgaricus (strain ATCC 11842 / DSM 20081 / BCRC 10696 / JCM 1002 / NBRC 13953 / NCIMB 11778 / NCTC 12712 / WDCM 00102 / Lb 14)).